A 978-amino-acid polypeptide reads, in one-letter code: Serine/threonine-protein kinase PLK4 (978 aa).

A Protein kinase domain is found at 13-266; the sequence is FQVLDLLGKG…LSGILDHPFI (254 aa). ATP-binding positions include 19 to 27 and Lys-42; that span reads LGKGGFACV. The active-site Proton acceptor is Asp-137. Composition is skewed to polar residues over residues 271-282 and 291-304; these read LNTKYSSPTRQH and SLDS…TIST. Disordered regions lie at residues 271 to 381, 489 to 578, 788 to 818, and 838 to 869; these read LNTK…TRTS, IEQP…AERL, AWKN…SSPS, and AQTT…QPIP. Over residues 324-335 the composition is skewed to basic and acidic residues; the sequence is RTSDIWPRDPKH. Polar residues-rich tracts occupy residues 351 to 362 and 371 to 381; these read TENVTTGSSSHV and AQYSGLKTRTS. 2 stretches are compositionally biased toward basic and acidic residues: residues 518 to 527 and 536 to 566; these read GSDSVSKDFD and ESRR…DKSL. Residues 565-678 enclose the Cryptic POLO box 1 (CPB1) domain; sequence SLGELTEPLN…AKFVQLVRKL (114 aa). In terms of domain architecture, Cryptic POLO box 2 (CPB2) spans 679 to 792; sequence TPKVTLYSKH…GRRPPAWKNS (114 aa). The segment covering 801–818 has biased composition (polar residues); it reads QQGCSNGQSQPVLPSSPS. A compositionally biased stretch (basic residues) spans 848–862; sequence KSRKTSPSKTSRHKQ. The POLO box domain maps to 895 to 973; the sequence is HVCKMAFVDG…LPAVIKTLAT (79 aa).

The protein belongs to the protein kinase superfamily. Ser/Thr protein kinase family. CDC5/Polo subfamily. In terms of assembly, homodimer. Ubiquitinated; leading to its degradation by the proteasome.

Its subcellular location is the cytoplasm. The protein resides in the cytoskeleton. It localises to the microtubule organizing center. The protein localises to the centrosome. It is found in the centriole. The catalysed reaction is L-seryl-[protein] + ATP = O-phospho-L-seryl-[protein] + ADP + H(+). It catalyses the reaction L-threonyl-[protein] + ATP = O-phospho-L-threonyl-[protein] + ADP + H(+). Functionally, serine/threonine-protein kinase that plays a central role in centriole duplication. Able to trigger procentriole formation on the surface of the mother centriole cylinder, leading to the recruitment of centriole biogenesis proteins. When overexpressed, it is able to induce centrosome amplification through the simultaneous generation of multiple procentrioles adjoining each parental centriole during S phase. In Nematostella vectensis (Starlet sea anemone), this protein is Serine/threonine-protein kinase PLK4.